Consider the following 172-residue polypeptide: Adenine phosphoribosyltransferase (172 aa).

It belongs to the purine/pyrimidine phosphoribosyltransferase family. Homodimer.

The protein resides in the cytoplasm. It carries out the reaction AMP + diphosphate = 5-phospho-alpha-D-ribose 1-diphosphate + adenine. It functions in the pathway purine metabolism; AMP biosynthesis via salvage pathway; AMP from adenine: step 1/1. Functionally, catalyzes a salvage reaction resulting in the formation of AMP, that is energically less costly than de novo synthesis. The sequence is that of Adenine phosphoribosyltransferase from Anaeromyxobacter dehalogenans (strain 2CP-C).